The primary structure comprises 368 residues: tRNA-specific 2-thiouridylase MnmA (368 aa).

ATP contacts are provided by residues 14-21 and L40; that span reads AMSGGVDS. The active-site Nucleophile is the C108. An intrachain disulfide couples C108 to C204. Residue G132 participates in ATP binding. The segment at 154–156 is interaction with tRNA; it reads KDQ. The active-site Cysteine persulfide intermediate is the C204.

This sequence belongs to the MnmA/TRMU family.

The protein localises to the cytoplasm. It carries out the reaction S-sulfanyl-L-cysteinyl-[protein] + uridine(34) in tRNA + AH2 + ATP = 2-thiouridine(34) in tRNA + L-cysteinyl-[protein] + A + AMP + diphosphate + H(+). In terms of biological role, catalyzes the 2-thiolation of uridine at the wobble position (U34) of tRNA, leading to the formation of s(2)U34. The polypeptide is tRNA-specific 2-thiouridylase MnmA (Rickettsia canadensis (strain McKiel)).